The following is a 228-amino-acid chain: LHFPL tetraspan subfamily member 2 protein (228 aa).

4 helical membrane passes run 11 to 31, 102 to 122, 132 to 152, and 181 to 201; these read MLWTLLSIVVAFAELIAFMSA, IFLAVGIFILCMVALVSVFTM, IFNVCGLLQGIAGLFLILGLI, and LGWAFYTAIGGTVLTFICAVF.

Belongs to the LHFP family. In terms of tissue distribution, expressed in all tissues and cell lines examined except brain and peripheral blood leukocytes.

Its subcellular location is the membrane. Its function is as follows. Plays a role in female and male fertility. Involved in distal reproductive tract development. The polypeptide is LHFPL tetraspan subfamily member 2 protein (Homo sapiens (Human)).